Here is a 387-residue protein sequence, read N- to C-terminus: Succinate--CoA ligase [ADP-forming] subunit beta (387 aa).

The region spanning 9–244 (KQLFASYGLP…VSQEDDRENR (236 aa)) is the ATP-grasp domain. ATP contacts are provided by residues Lys46, 53-55 (GRG), Glu99, Cys102, and Glu107. Positions 199 and 213 each coordinate Mg(2+). Substrate is bound by residues Asn264 and 321-323 (GIV).

This sequence belongs to the succinate/malate CoA ligase beta subunit family. Heterotetramer of two alpha and two beta subunits. Mg(2+) serves as cofactor.

It carries out the reaction succinate + ATP + CoA = succinyl-CoA + ADP + phosphate. It catalyses the reaction GTP + succinate + CoA = succinyl-CoA + GDP + phosphate. Its pathway is carbohydrate metabolism; tricarboxylic acid cycle; succinate from succinyl-CoA (ligase route): step 1/1. In terms of biological role, succinyl-CoA synthetase functions in the citric acid cycle (TCA), coupling the hydrolysis of succinyl-CoA to the synthesis of either ATP or GTP and thus represents the only step of substrate-level phosphorylation in the TCA. The beta subunit provides nucleotide specificity of the enzyme and binds the substrate succinate, while the binding sites for coenzyme A and phosphate are found in the alpha subunit. This Legionella pneumophila (strain Paris) protein is Succinate--CoA ligase [ADP-forming] subunit beta.